We begin with the raw amino-acid sequence, 102 residues long: Large ribosomal subunit protein bL21 (102 aa).

This sequence belongs to the bacterial ribosomal protein bL21 family. In terms of assembly, part of the 50S ribosomal subunit. Contacts protein L20.

Functionally, this protein binds to 23S rRNA in the presence of protein L20. This Exiguobacterium sp. (strain ATCC BAA-1283 / AT1b) protein is Large ribosomal subunit protein bL21.